A 1397-amino-acid chain; its full sequence is MNQEVMNLFNPTAPTQTFDQIKISIASPERILSWSYGEIKKPETINYRTFKPERDGLFCARIFGPIKDYECLCGKYKRMKYKGIICEKCGVEVTLSKVRRERMGHIELAAPVAHIWFLKSLPSRIGLLLDMTLKDLERVLYFENYIVLEPGLTSLKERQLLTEEEYIDAQDQYGEDSFTAGIGAEAIRELMMALDLEKIAADLRVEIAESTSELKPKKLAKRLKLIEAFIESGNKPEWMIMTQIPVIPPELRPLVPLDGGRFATSDLNDLYRRVINRNNRLKRLMELRAPDIIIRNEKRMLQESVDALFDNGRRGRVITGANKRPLKSLADMLKGKQGRFRQNLLGKRVDYSGRSVIVVGPELKLHQCGLPKKMALELFKPFIYSRLEAKGLSATVKQAKKLVEKERPEVWEILEQVIREHPVLLNRAPTLHRLGIQAFEPVLIEGKAIQLHPLVCAAFNADFDGDQMAVHVPLSLEAQLEARVLMMSTNNILHPANGSPIIVPSQDIVLGLYYVTIQKDNEPGEGMVFGSVSEIEHALAVKAVTLHAKVKARYTTKDADGNSYTEVVDTTPGRMMVGELLPRHPNVPFDLVNRLLTKRDISKMIDVVYRHCGQKETVIFCDQIMALGFRQAFRAGISFGKDDMVIPEEKAKLVEETQTLATEYEQQYIDGLITQGEKYNKVVDAWAKCTDRVADVMMQKISAVQIDPETKREKQINSIYMMAHSGARGSPAQMKQLAGMRGLMAKPSGEIIETPIISNFKEGLTVLEYFNSTHGARKGLADTALKTANSGYLTRRLVDVAQDSIITEEDCGTIGGITVQPVIEAGDVIVSLGTRVLGRTTAEDVMNPATGEVLIPKNHLIDEADVDTIEEANVQGIKIRSVLTCEAANGVCGACYGRDLARGTPVNMGEAVGVIAAQSIGEPGTQLTMRTFHIGGTAQVVDSSFIESNHAGTIKIVNRNVVKDSNGVLVVMGRNVQVQIIDEHGGERASHKLTYGSRLKFDDGDKIERGQRISEWDPYTMPMLTEVNGIAEFEDLVDGVSIREVADEATGISSRVVVDWRASPRGSDLRPAVVVKDKNGKILKLANGNDARYLLSVDAILSVDNGAAVHAGDVLARIPTEGAKTRDITGGLPRVAELFEARRPKDHAIIAEATGRVEFGKDYKNKRRIIVHPVDESLEPIEYLIPKGKHISVQEGDVIEKGEFILDGHPAPHDILAISGVEELAAYLVNEVQDVYRLQGVAINDKHIEVIVRNMLQKVEVTSPGESITLPGEQLDRAEFDEMNAKLEAQGKTPATAVPVLLGITKASLQTRSFISAASFQETTRVLTEAAVSGKVDQLVGLKENVIVGRLIPAGTGGMLQRLRGEAQNRDDKILEDQGGATPTASTEIKEPAEGAA.

4 residues coordinate Zn(2+): Cys71, Cys73, Cys86, and Cys89. Asp462, Asp464, and Asp466 together coordinate Mg(2+). 4 residues coordinate Zn(2+): Cys811, Cys885, Cys892, and Cys895. Residues 1368–1397 (QNRDDKILEDQGGATPTASTEIKEPAEGAA) form a disordered region. The segment covering 1388–1397 (EIKEPAEGAA) has biased composition (basic and acidic residues).

The protein belongs to the RNA polymerase beta' chain family. The RNAP catalytic core consists of 2 alpha, 1 beta, 1 beta' and 1 omega subunit. When a sigma factor is associated with the core the holoenzyme is formed, which can initiate transcription. The cofactor is Mg(2+). It depends on Zn(2+) as a cofactor.

The catalysed reaction is RNA(n) + a ribonucleoside 5'-triphosphate = RNA(n+1) + diphosphate. DNA-dependent RNA polymerase catalyzes the transcription of DNA into RNA using the four ribonucleoside triphosphates as substrates. The sequence is that of DNA-directed RNA polymerase subunit beta' from Parvibaculum lavamentivorans (strain DS-1 / DSM 13023 / NCIMB 13966).